Reading from the N-terminus, the 426-residue chain is Citrate synthase (426 aa).

Residues His314 and Asp372 contribute to the active site.

The protein belongs to the citrate synthase family.

The enzyme catalyses oxaloacetate + acetyl-CoA + H2O = citrate + CoA + H(+). Its pathway is carbohydrate metabolism; tricarboxylic acid cycle; isocitrate from oxaloacetate: step 1/2. In Helicobacter pylori (strain J99 / ATCC 700824) (Campylobacter pylori J99), this protein is Citrate synthase (gltA).